The chain runs to 344 residues: Protein PopA1 (344 aa).

Disordered regions lie at residues 1 to 28 (MSVG…NSQQ), 58 to 108 (SAGG…DANN), 134 to 156 (QPGG…AGGQ), 211 to 242 (GNGV…EDQG), and 268 to 311 (GGGN…NLQS). Low complexity-rich tracts occupy residues 8 to 28 (SPSN…NSQQ) and 65 to 83 (NTGN…ANDP). The span at 89-108 (SKSQGPQSANKTGNVDDANN) shows a compositional bias: polar residues. Positions 138-156 (NDKGNGVGGANGAKGAGGQ) are enriched in gly residues. The span at 215-235 (NGNQANGPQNAGDVNGANGAD) shows a compositional bias: low complexity. Gly residues predominate over residues 268 to 279 (GGGNQAQGGSKG). The segment covering 280–294 (AGNASPASGANPGAN) has biased composition (low complexity). Residues 295 to 311 (QPGSADDQSSGQNNLQS) show a composition bias toward polar residues.

In terms of processing, popA2 and PopA3 are produced from PopA1.

The protein localises to the secreted. Functionally, acts as a specific hypersensitive response (HR) elicitor. Has activity on tobacco (non-host plant) and petunia but is without activity on tomato (host plant); PopA3 seems to be more active than a PopA1-PopA2 mixture. The polypeptide is Protein PopA1 (popA) (Ralstonia nicotianae (strain ATCC BAA-1114 / GMI1000) (Ralstonia solanacearum)).